We begin with the raw amino-acid sequence, 224 residues long: Cytidylate kinase (224 aa).

Position 11 to 19 (11 to 19) interacts with ATP; that stretch reads GPAAAGKST.

This sequence belongs to the cytidylate kinase family. Type 1 subfamily.

Its subcellular location is the cytoplasm. The catalysed reaction is CMP + ATP = CDP + ADP. It carries out the reaction dCMP + ATP = dCDP + ADP. This is Cytidylate kinase from Bacillus velezensis (strain DSM 23117 / BGSC 10A6 / LMG 26770 / FZB42) (Bacillus amyloliquefaciens subsp. plantarum).